The sequence spans 330 residues: NmrA-like family domain-containing oxidoreductase notO (330 aa).

NADP(+) is bound by residues 12–17 (VGIGSL), 38–42 (HHFAQ), 59–60 (RS), 80–82 (IEA), and 160–163 (LGGG). Residues 12 to 32 (VGIGSLPAGLVALFMGATSGI) traverse the membrane as a helical segment. Positions 158–202 (SVLGGGLESPLNEQDLDLRDPKNWTFWSSSMHSGTMGTLTLERIA) are interaction with ASS1. 2 N-linked (GlcNAc...) asparagine glycosylation sites follow: asparagine 180 and asparagine 207.

The protein belongs to the NmrA-type oxidoreductase family.

It localises to the membrane. Functionally, nmrA-like family domain-containing oxidoreductase; part of the gene cluster that mediates the biosynthesis of notoamide, a fungal indole alkaloid that belongs to a family of natural products containing a characteristic bicyclo[2.2.2]diazaoctane core. The first step of notoamide biosynthesis involves coupling of L-proline and L-tryptophan by the bimodular NRPS notE, to produce cyclo-L-tryptophan-L-proline called brevianamide F. The reverse prenyltransferase notF then acts as a deoxybrevianamide E synthase and converts brevianamide F to deoxybrevianamide E via reverse prenylation at C-2 of the indole ring leading to the bicyclo[2.2.2]diazaoctane core. Deoxybrevianamide E is further hydroxylated at C-6 of the indole ring, likely catalyzed by the cytochrome P450 monooxygenase notG, to yield 6-hydroxy-deoxybrevianamide E. 6-hydroxy-deoxybrevianamide E is a specific substrate of the prenyltransferase notC for normal prenylation at C-7 to produce 6-hydroxy-7-prenyl-deoxybrevianamide, also called notoamide S. As the proposed pivotal branching point in notoamide biosynthesis, notoamide S can be diverted to notoamide E through an oxidative pyran ring closure putatively catalyzed by either notH cytochrome P450 monooxygenase or the notD FAD-linked oxidoreductase. This step would be followed by an indole 2,3-epoxidation-initiated pinacol-like rearrangement catalyzed by the notB FAD-dependent monooxygenase leading to the formation of notoamide C and notoamide D. On the other hand notoamide S is converted to notoamide T by notH (or notD), a bifunctional oxidase that also functions as the intramolecular Diels-Alderase responsible for generation of (+)-notoamide T. To generate antipodal (-)-notoaminide T, notH' (or notD') in Aspergillus versicolor is expected to catalyze a Diels-Alder reaction leading to the opposite stereochemistry. The remaining oxidoreductase notD (or notH) likely catalyzes the oxidative pyran ring formation to yield (+)-stephacidin A. The FAD-dependent monooxygenase notI is highly similar to notB and is predicted to catalyze a similar conversion from (+)-stephacidin A to (-)-notoamide B via the 2,3-epoxidation of (+)-stephacidin A followed by a pinacol-type rearrangement. Finally, it remains unclear which enzyme could be responsible for the final hydroxylation steps leading to notoamide A and sclerotiamide. The function of notO in the notoamide biosynthesis has not been determined yet. This Aspergillus sp. (strain MF297-2) protein is NmrA-like family domain-containing oxidoreductase notO.